Reading from the N-terminus, the 446-residue chain is Glucarate dehydratase-related protein (446 aa).

Substrate-binding residues include H31, T104, Y149, and K204. The Proton acceptor role is filled by K206. The Mg(2+) site is built by D234, E265, and N288. Substrate is bound at residue D234–N236. Residues N288, H338–N340, H367, and R421 each bind substrate. H338 functions as the Proton acceptor in the catalytic mechanism.

This sequence belongs to the mandelate racemase/muconate lactonizing enzyme family. GlucD subfamily. A divalent metal cation serves as cofactor.

In terms of biological role, does not seem to have an in-vivo activity on glucarate or idarate. Its real substrate is unknown. In Escherichia coli (strain K12), this protein is Glucarate dehydratase-related protein (gudX).